The primary structure comprises 172 residues: Envelope protein UL45 (172 aa).

At 1–27 the chain is on the intravirion side; that stretch reads MAFRASGPAYQPLAPAASPARARVPAV. The helical; Signal-anchor for type II membrane protein transmembrane segment at 28–48 threads the bilayer; sequence AWIGVGAIVGAFALVAALVLV. Residues 49–172 are Virion surface-facing; the sequence is PPRSSWGLSP…TSIRNALGLP (124 aa).

Belongs to the herpesviridae HHV-1 UL45 family.

The protein localises to the virion membrane. In terms of biological role, important virulence factor of HSV neurotropism. Seems to be required for glycoprotein B-induced fusion. Dispensable for growth in vitro. This chain is Envelope protein UL45, found in Homo sapiens (Human).